The following is a 358-amino-acid chain: MFDFSIITSWIHQTLTSVMPEGLAVFIECVVIGVCIVALYAILAILLIYMERKVCGFFQCRLGPNRVGKWGSIQVLCDVLKMLTKEIIELKHSDKFLYNLAPFMVIIASFLTFSCLPISKGLEVLDFNVGVFFLLAASSIGVVGILLAGWGSNNKFSLIGAMRSGAQIISYELSVGLSILTMVVLMGTMQFSEIVESQANGWFIFKGHIPALIAFVIYLIAGNAECNRGPFDLPEAESELTAGYHTEYSGMHFGFFYLAEYLNMFIVAAVAATIFLGGWMPLHIVGLDGFNAVMDYIPGFIWFFGKAFFVVFLLMWIKWTFPRLRIDQILNLEWKYLVPISMVNLVIMVLIVVFGLHF.

The next 8 helical transmembrane spans lie at 30-50 (VVIG…LIYM), 96-116 (FLYN…FSCL), 129-149 (VGVF…LLAG), 168-188 (IISY…LMGT), 201-221 (GWFI…YLIA), 265-285 (FIVA…LHIV), 297-317 (IPGF…LMWI), and 336-356 (YLVP…VFGL).

The protein belongs to the complex I subunit 1 family. As to quaternary structure, NDH-1 is composed of 14 different subunits. Subunits NuoA, H, J, K, L, M, N constitute the membrane sector of the complex.

The protein resides in the cell inner membrane. It catalyses the reaction a quinone + NADH + 5 H(+)(in) = a quinol + NAD(+) + 4 H(+)(out). Its function is as follows. NDH-1 shuttles electrons from NADH, via FMN and iron-sulfur (Fe-S) centers, to quinones in the respiratory chain. The immediate electron acceptor for the enzyme in this species is believed to be ubiquinone. Couples the redox reaction to proton translocation (for every two electrons transferred, four hydrogen ions are translocated across the cytoplasmic membrane), and thus conserves the redox energy in a proton gradient. This subunit may bind ubiquinone. This chain is NADH-quinone oxidoreductase subunit H, found in Bacteroides fragilis (strain ATCC 25285 / DSM 2151 / CCUG 4856 / JCM 11019 / LMG 10263 / NCTC 9343 / Onslow / VPI 2553 / EN-2).